We begin with the raw amino-acid sequence, 530 residues long: Pre-mRNA-splicing factor PRP9 (530 aa).

The Matrin-type 1 zinc-finger motif lies at 280–310 (IYCPFCSRWFKTSSVFESHLVGKIHKKNESK). The disordered stretch occupies residues 367 to 388 (DSTEKEGAEQVDGEQRDGQLQE). Basic and acidic residues predominate over residues 368–388 (STEKEGAEQVDGEQRDGQLQE). A Matrin-type 2 zinc finger spans residues 421 to 452 (YRCEICSNKVYNGRRTFERHFNEERHIYHLRC). Residues 488–516 (AVPPKPNPSQLKVPTELELEEEDEEGNVM) are disordered. Positions 504–513 (LELEEEDEEG) are enriched in acidic residues.

Belongs to the SF3A3 family. As to quaternary structure, belongs to the CWC complex (or CEF1-associated complex), a spliceosome sub-complex reminiscent of a late-stage spliceosome composed of the U2, U5 and U6 snRNAs and at least BUD13, BUD31, BRR2, CDC40, CEF1, CLF1, CUS1, CWC2, CWC15, CWC21, CWC22, CWC23, CWC24, CWC25, CWC27, ECM2, HSH155, IST3, ISY1, LEA1, MSL1, NTC20, PRP8, PRP9, PRP11, PRP19, PRP21, PRP22, PRP45, PRP46, SLU7, SMB1, SMD1, SMD2, SMD3, SMX2, SMX3, SNT309, SNU114, SPP2, SYF1, SYF2, RSE1 and YJU2.

The protein resides in the nucleus. In terms of biological role, mRNA splicing factors, PRP9, PRP11, and PRP21, are necessary for binding of the U2 snRNP to the pre-mRNA in an early step of spliceosome assembly. This is Pre-mRNA-splicing factor PRP9 (PRP9) from Saccharomyces cerevisiae (strain ATCC 204508 / S288c) (Baker's yeast).